Here is a 470-residue protein sequence, read N- to C-terminus: Homogentisate 1,2-dioxygenase (470 aa).

Residues histidine 356, glutamate 362, and histidine 392 each contribute to the Fe cation site.

The protein belongs to the homogentisate dioxygenase family. Fe cation is required as a cofactor.

The enzyme catalyses homogentisate + O2 = 4-maleylacetoacetate + H(+). It participates in amino-acid degradation; L-phenylalanine degradation; acetoacetate and fumarate from L-phenylalanine: step 4/6. The chain is Homogentisate 1,2-dioxygenase (HGO) from Oryza sativa subsp. japonica (Rice).